Consider the following 201-residue polypeptide: Probable molybdenum cofactor guanylyltransferase (201 aa).

Residues 20-22 (LAG), Lys32, Asp77, and Asp106 each bind GTP. Asp106 contributes to the Mg(2+) binding site.

It belongs to the MobA family. Mg(2+) is required as a cofactor.

The protein resides in the cytoplasm. It carries out the reaction Mo-molybdopterin + GTP + H(+) = Mo-molybdopterin guanine dinucleotide + diphosphate. Functionally, transfers a GMP moiety from GTP to Mo-molybdopterin (Mo-MPT) cofactor (Moco or molybdenum cofactor) to form Mo-molybdopterin guanine dinucleotide (Mo-MGD) cofactor. This chain is Probable molybdenum cofactor guanylyltransferase, found in Aquifex aeolicus (strain VF5).